A 158-amino-acid chain; its full sequence is Transcription elongation factor GreA (158 aa).

A coiled-coil region spans residues 1–26 (MNKVPLTEKGAQQLREELQELKTVVR).

The protein belongs to the GreA/GreB family.

Its function is as follows. Necessary for efficient RNA polymerase transcription elongation past template-encoded arresting sites. The arresting sites in DNA have the property of trapping a certain fraction of elongating RNA polymerases that pass through, resulting in locked ternary complexes. Cleavage of the nascent transcript by cleavage factors such as GreA or GreB allows the resumption of elongation from the new 3'terminus. GreA releases sequences of 2 to 3 nucleotides. The polypeptide is Transcription elongation factor GreA (Nitrosococcus oceani (strain ATCC 19707 / BCRC 17464 / JCM 30415 / NCIMB 11848 / C-107)).